The following is a 194-amino-acid chain: 7-methyl-GTP pyrophosphatase (194 aa).

Asp70 serves as the catalytic Proton acceptor.

This sequence belongs to the Maf family. YceF subfamily. A divalent metal cation is required as a cofactor.

The protein resides in the cytoplasm. It catalyses the reaction N(7)-methyl-GTP + H2O = N(7)-methyl-GMP + diphosphate + H(+). Its function is as follows. Nucleoside triphosphate pyrophosphatase that hydrolyzes 7-methyl-GTP (m(7)GTP). May have a dual role in cell division arrest and in preventing the incorporation of modified nucleotides into cellular nucleic acids. In Ralstonia nicotianae (strain ATCC BAA-1114 / GMI1000) (Ralstonia solanacearum), this protein is 7-methyl-GTP pyrophosphatase.